Reading from the N-terminus, the 211-residue chain is Ribosomal RNA small subunit methyltransferase G (211 aa).

S-adenosyl-L-methionine contacts are provided by residues Gly79, Leu84, 130-131, and Arg145; that span reads VE.

This sequence belongs to the methyltransferase superfamily. RNA methyltransferase RsmG family.

The protein resides in the cytoplasm. The catalysed reaction is guanosine(527) in 16S rRNA + S-adenosyl-L-methionine = N(7)-methylguanosine(527) in 16S rRNA + S-adenosyl-L-homocysteine. Functionally, specifically methylates the N7 position of guanine in position 527 of 16S rRNA. The protein is Ribosomal RNA small subunit methyltransferase G of Alteromonas mediterranea (strain DSM 17117 / CIP 110805 / LMG 28347 / Deep ecotype).